The primary structure comprises 317 residues: Ribosomal protein L11 methyltransferase (317 aa).

Residues Thr158, Gly179, Asp201, and Asn244 each contribute to the S-adenosyl-L-methionine site.

This sequence belongs to the methyltransferase superfamily. PrmA family.

It is found in the cytoplasm. It carries out the reaction L-lysyl-[protein] + 3 S-adenosyl-L-methionine = N(6),N(6),N(6)-trimethyl-L-lysyl-[protein] + 3 S-adenosyl-L-homocysteine + 3 H(+). Methylates ribosomal protein L11. In Streptococcus pyogenes serotype M6 (strain ATCC BAA-946 / MGAS10394), this protein is Ribosomal protein L11 methyltransferase.